The following is a 449-amino-acid chain: UDP-N-acetylmuramoylalanine--D-glutamate ligase (449 aa).

Position 118–124 (118–124) interacts with ATP; the sequence is GTNGKTT.

Belongs to the MurCDEF family.

It is found in the cytoplasm. The catalysed reaction is UDP-N-acetyl-alpha-D-muramoyl-L-alanine + D-glutamate + ATP = UDP-N-acetyl-alpha-D-muramoyl-L-alanyl-D-glutamate + ADP + phosphate + H(+). The protein operates within cell wall biogenesis; peptidoglycan biosynthesis. Cell wall formation. Catalyzes the addition of glutamate to the nucleotide precursor UDP-N-acetylmuramoyl-L-alanine (UMA). The chain is UDP-N-acetylmuramoylalanine--D-glutamate ligase from Staphylococcus aureus (strain MSSA476).